The sequence spans 223 residues: N-terminal Xaa-Pro-Lys N-methyltransferase 1 (223 aa).

Position 1 is an N-acetylmethionine (methionine 1). Threonine 2 carries the post-translational modification N-acetylthreonine; in N-terminal Xaa-Pro-Lys N-methyltransferase 1, N-terminally processed. S-adenosyl-L-methionine is bound by residues glycine 69, arginine 74, 91–93, 119–120, and glutamine 135; these read DVT and LQ.

Belongs to the methyltransferase superfamily. NTM1 family.

The protein localises to the nucleus. It catalyses the reaction N-terminal L-alanyl-L-prolyl-L-lysyl-[protein] + 3 S-adenosyl-L-methionine = N-terminal N,N,N-trimethyl-L-alanyl-L-prolyl-L-lysyl-[protein] + 3 S-adenosyl-L-homocysteine + 3 H(+). The enzyme catalyses N-terminal L-seryl-L-prolyl-L-lysyl-[protein] + 3 S-adenosyl-L-methionine = N-terminal N,N,N-trimethyl-L-seryl-L-prolyl-L-lysyl-[protein] + 3 S-adenosyl-L-homocysteine + 3 H(+). The catalysed reaction is N-terminal L-prolyl-L-prolyl-L-lysyl-[protein] + 2 S-adenosyl-L-methionine = N-terminal N,N-dimethyl-L-prolyl-L-prolyl-L-lysyl-[protein] + 2 S-adenosyl-L-homocysteine + 2 H(+). Distributive alpha-N-methyltransferase that methylates the N-terminus of target proteins containing the N-terminal motif [Ala/Gly/Pro/Ser]-Pro-Lys when the initiator Met is cleaved. Specifically catalyzes mono-, di- or tri-methylation of the exposed alpha-amino group of the Ala, Gly or Ser residue in the [Ala/Gly/Ser]-Pro-Lys motif and mono- or di-methylation of Pro in the Pro-Pro-Lys motif. Some of the substrates may be primed by NTMT2-mediated monomethylation. Catalyzes the trimethylation of the N-terminal Gly in CENPA (after removal of Met-1). Responsible for the N-terminal methylation of KLHL31, MYL2, MYL3, RB1, RCC1, RPL23A and SET. Required during mitosis for normal bipolar spindle formation and chromosome segregation via its action on RCC1. This Mus musculus (Mouse) protein is N-terminal Xaa-Pro-Lys N-methyltransferase 1 (Ntmt1).